The chain runs to 556 residues: Urocanate hydratase (556 aa).

NAD(+) contacts are provided by residues 52–53 (GG), Q130, 176–178 (GMG), E196, R201, 243–244 (NA), 264–268 (QTSAH), 274–275 (YL), and Y323. Residue C411 is part of the active site. G493 lines the NAD(+) pocket.

This sequence belongs to the urocanase family. NAD(+) is required as a cofactor.

It is found in the cytoplasm. The enzyme catalyses 4-imidazolone-5-propanoate = trans-urocanate + H2O. It functions in the pathway amino-acid degradation; L-histidine degradation into L-glutamate; N-formimidoyl-L-glutamate from L-histidine: step 2/3. Its function is as follows. Catalyzes the conversion of urocanate to 4-imidazolone-5-propionate. The chain is Urocanate hydratase from Rhodospirillum rubrum (strain ATCC 11170 / ATH 1.1.1 / DSM 467 / LMG 4362 / NCIMB 8255 / S1).